Consider the following 600-residue polypeptide: MVVVEGLAGLHRSHGCGELTAADAGKEVTLMGWVHRRRDHGGLIFIDLRDRSGLVQVVCDPKSGPAFQKAEEVRNEYVVAVRGLVRRRPEGTVNPKLPTGEIEVVAEEFRLLNRAKTPPFYIDDGIDVDEALRLRYRYLDLRRPEMQRLLYLRYRTTRAIRDFLDARGFWEIETPMLTRSTPEGARDFLVPSRLRPGEFFALPQSPQLFKQILMVAGVERYFQIVRCFRDEDLRADRQPEFTQLDMEMSFVQREDILKLVEELMAYVFRETLGVELALPLPRLTYREAMDRYGSDKPDIRFGMEIVDVSDLVAGCGFKVFAEAVARGGVVRGLCAPGCAGYSRRELDELTRQAAVFGAKGLAWMAVTPEGIRSPIAKFFTSGELEGLVARLAGKPGDLLLFVADTETTAATALGALRLEMGRRLHLYDPEQLAFTWVTEFPLLEYSAEEKRYVAVHHPFTMPMEEDWPLLDSDPLRVRALAYDLVLNGVELGGGSIRIHRRDIQEKMFNLLGFTPEAARDKFGFLLDAFEYGTPPHGGIAFGLDRMLMLMARRDTIRDCIPFPKTQSGTCLMTAAPSGVSPEQLQELHLRSTARKSTNPA.

Position 183 (Glu183) interacts with L-aspartate. The aspartate stretch occupies residues 207 to 210 (QLFK). Residue Arg229 participates in L-aspartate binding. ATP is bound by residues 229–231 (RDE) and Gln238. His456 serves as a coordination point for L-aspartate. Residue Glu490 participates in ATP binding. Residue Arg497 coordinates L-aspartate. An ATP-binding site is contributed by 542–545 (GLDR).

This sequence belongs to the class-II aminoacyl-tRNA synthetase family. Type 1 subfamily. In terms of assembly, homodimer.

Its subcellular location is the cytoplasm. It catalyses the reaction tRNA(Asx) + L-aspartate + ATP = L-aspartyl-tRNA(Asx) + AMP + diphosphate. In terms of biological role, aspartyl-tRNA synthetase with relaxed tRNA specificity since it is able to aspartylate not only its cognate tRNA(Asp) but also tRNA(Asn). Reaction proceeds in two steps: L-aspartate is first activated by ATP to form Asp-AMP and then transferred to the acceptor end of tRNA(Asp/Asn). In Moorella thermoacetica (strain ATCC 39073 / JCM 9320), this protein is Aspartate--tRNA(Asp/Asn) ligase.